The primary structure comprises 890 residues: Alanine--tRNA ligase (890 aa).

Zn(2+)-binding residues include H573, H577, C675, and H679.

Belongs to the class-II aminoacyl-tRNA synthetase family. Zn(2+) is required as a cofactor.

The protein resides in the cytoplasm. The enzyme catalyses tRNA(Ala) + L-alanine + ATP = L-alanyl-tRNA(Ala) + AMP + diphosphate. In terms of biological role, catalyzes the attachment of alanine to tRNA(Ala) in a two-step reaction: alanine is first activated by ATP to form Ala-AMP and then transferred to the acceptor end of tRNA(Ala). Also edits incorrectly charged Ser-tRNA(Ala) and Gly-tRNA(Ala) via its editing domain. The chain is Alanine--tRNA ligase from Streptomyces avermitilis (strain ATCC 31267 / DSM 46492 / JCM 5070 / NBRC 14893 / NCIMB 12804 / NRRL 8165 / MA-4680).